Here is a 421-residue protein sequence, read N- to C-terminus: Hydrolyase poxO (421 aa).

S239 functions as the Nucleophile in the catalytic mechanism.

This sequence belongs to the AB hydrolase superfamily. FUS2 hydrolase family. In terms of assembly, homodimer.

It functions in the pathway secondary metabolite biosynthesis. Functionally, hydrolyase; part of the gene cluster that mediates the biosynthesis of oxaleimides, cytotoxic compounds containing an unusual disubstituted succinimide moiety. The first step of the pathway is provided by the HR-PKS poxF that serves in a new mode of collaborative biosynthesis with the PKS-NRPS poxE, by providing the olefin containing amino acid substrate via the synthesis of an ACP-bound dec-4-enoate. The cytochrome P450 monooxygenase poxM-catalyzed oxidation at the alpha-position creates the enzyme-bound 2-hydroxydec-4-enoyl-ACP thioester, which may be prone to spontaneous hydrolysis to yield 2-hydroxydec-4-enoic acid due to increased electrophilicity of the carbonyl. 2-hydroxydec-4-enoic acid can then be further oxidized by poxM to yield the alpha-ketoacid 2-oxodec-4-enoicacid, which is reductively aminated by the aminotransferase poxL to yield (S,E)-2-aminodec-4-enoic acid. The Hybrid PKS-NRPS synthetase poxE then performs condensation between the octaketide product of its PKS modules and the amino group of (S,E)-2-aminodec-4-enoic acid which is activated and incorporated by the adenylation domain. The resulting aminoacyl product can be cyclized by the Diels-Alderase PoxQ and reductively released by the reductive (R) domain of poxE to yield an aldehyde intermediate. The released aldehyde is then substrate for a Knoevenagel condensation by the hydrolyase poxO followed by an oxidation at the 5-position of the pyrrolidone ring. The presence of the olefin from the amino acid building block allows for migration of the substituted allyl group to occur. This allylic transposition reaction takes place in a conjugate addition, semipinacol-like fashion to yield a succinimide intermediate. Iterative two-electron oxidations of the C7 methyl of the succinimide intermediate to the carboxylic acid can be catalyzed by one of two remaining cytochrome P450 monooxygenasess poxC or poxD to yield oxaleimide A. Subsequent oxidation yields the maleimide scaffold oxaleimide I. Both oxaleimide A and oxaleimide I can undergo oxidative modifications in the decalin ring to yield the series of products oxaleimides B to H. This is Hydrolyase poxO from Penicillium oxalicum (strain 114-2 / CGMCC 5302) (Penicillium decumbens).